The following is a 118-amino-acid chain: Thioredoxin-like protein CXXS1 (118 aa).

In terms of domain architecture, Thioredoxin spans 2–110 (ARVVKIDSAE…IKKRVDGFVQ (109 aa)).

This sequence belongs to the thioredoxin family. As to expression, ubiquitous.

It localises to the cytoplasm. Its function is as follows. Possesses low disulfide reductase activity, but efficient protein disulfide isomerase activity. Does not possess deglutathionylation activity. The protein is Thioredoxin-like protein CXXS1 (CXXS1) of Arabidopsis thaliana (Mouse-ear cress).